The sequence spans 340 residues: Glyceraldehyde-3-phosphate dehydrogenase, cytosolic (340 aa).

Residues 16–17 (RI), Asp-38, and Arg-85 each bind NAD(+). Residues 156 to 158 (SCT), Thr-187, 216 to 217 (TG), and Arg-239 each bind D-glyceraldehyde 3-phosphate. Cys-157 (nucleophile) is an active-site residue. Asn-321 contributes to the NAD(+) binding site.

This sequence belongs to the glyceraldehyde-3-phosphate dehydrogenase family. In terms of assembly, homotetramer.

It is found in the cytoplasm. The enzyme catalyses D-glyceraldehyde 3-phosphate + phosphate + NAD(+) = (2R)-3-phospho-glyceroyl phosphate + NADH + H(+). Its pathway is carbohydrate degradation; glycolysis; pyruvate from D-glyceraldehyde 3-phosphate: step 1/5. In terms of biological role, key enzyme in glycolysis that catalyzes the first step of the pathway by converting D-glyceraldehyde 3-phosphate (G3P) into 3-phospho-D-glyceroyl phosphate. Essential for the maintenance of cellular ATP levels and carbohydrate metabolism. In Taxus baccata (English yew), this protein is Glyceraldehyde-3-phosphate dehydrogenase, cytosolic.